A 182-amino-acid polypeptide reads, in one-letter code: Adenine phosphoribosyltransferase (182 aa).

Belongs to the purine/pyrimidine phosphoribosyltransferase family. In terms of assembly, homodimer.

It localises to the cytoplasm. It catalyses the reaction AMP + diphosphate = 5-phospho-alpha-D-ribose 1-diphosphate + adenine. Its pathway is purine metabolism; AMP biosynthesis via salvage pathway; AMP from adenine: step 1/1. In terms of biological role, catalyzes a salvage reaction resulting in the formation of AMP, that is energically less costly than de novo synthesis. This chain is Adenine phosphoribosyltransferase, found in Pseudomonas putida (strain GB-1).